The primary structure comprises 246 residues: Biosynthetic peptidoglycan transglycosylase (246 aa).

A helical transmembrane segment spans residues 28–48; that stretch reads FALFLVLFLSSVVLFRFVPVP.

It belongs to the glycosyltransferase 51 family.

It is found in the cell inner membrane. It carries out the reaction [GlcNAc-(1-&gt;4)-Mur2Ac(oyl-L-Ala-gamma-D-Glu-L-Lys-D-Ala-D-Ala)](n)-di-trans,octa-cis-undecaprenyl diphosphate + beta-D-GlcNAc-(1-&gt;4)-Mur2Ac(oyl-L-Ala-gamma-D-Glu-L-Lys-D-Ala-D-Ala)-di-trans,octa-cis-undecaprenyl diphosphate = [GlcNAc-(1-&gt;4)-Mur2Ac(oyl-L-Ala-gamma-D-Glu-L-Lys-D-Ala-D-Ala)](n+1)-di-trans,octa-cis-undecaprenyl diphosphate + di-trans,octa-cis-undecaprenyl diphosphate + H(+). The protein operates within cell wall biogenesis; peptidoglycan biosynthesis. Functionally, peptidoglycan polymerase that catalyzes glycan chain elongation from lipid-linked precursors. In Pasteurella multocida (strain Pm70), this protein is Biosynthetic peptidoglycan transglycosylase.